We begin with the raw amino-acid sequence, 154 residues long: AP-1 complex subunit sigma-2 (154 aa).

Belongs to the adaptor complexes small subunit family. As to quaternary structure, adaptor protein complex 1 (AP-1) is a heterotetramer composed of two large adaptins (gamma-type subunit and beta-type subunit), a medium adaptin (mu-type subunit) and a small adaptin (sigma-type subunit).

The protein resides in the golgi apparatus. Its subcellular location is the trans-Golgi network. It localises to the cytoplasmic vesicle. The protein localises to the clathrin-coated vesicle membrane. Subunit of clathrin-associated adaptor protein complex 1 that plays a role in protein sorting in the trans-Golgi network (TGN) and endosomes. The AP complexes mediate the recruitment of clathrin to membranes and the recognition of sorting signals within the cytosolic tails of transmembrane cargo molecules. Also involved in early steps of phagocytosis and macropinocytosis. The sequence is that of AP-1 complex subunit sigma-2 (ap1s2) from Dictyostelium discoideum (Social amoeba).